We begin with the raw amino-acid sequence, 333 residues long: MKLLKREGLSLTEEKALWMYQKMLEIRGFEDKVHELFAQGVLPGFVHLYAGEEAVAVGVCAHLHDGDSITSTHRGHGHCIAKGCDLDGMMAEIFGKATGLCKGKGGSMHIADLDKGMLGANGIVGGGFTLACGSALTAKYKQTKNVSVCFFGDGANNQGTFHEGLNLAAVWNLPVVFVAENNGYGEATPFEYASACDSIADRAAAYNMPGVTVDGKDILAVYQAAEEAIERARNGGGPSLIECMTYRNYGHFEGDAQTYKTKDERVEHLEEKDAIQGFKNYLLKETDANKLSDIEQRVSESIEKAVSFSEDSPYPKDSELLTDVYVSYEKGGM.

As to quaternary structure, tetramer of 2 alpha and 2 beta subunits. It depends on thiamine diphosphate as a cofactor.

It functions in the pathway ketone degradation; acetoin degradation. Functionally, catalyzes the 2,6-dichlorophenolindophenol-dependent cleavage of acetoin into acetate and acetaldehyde. The alpha subunit is probably the catalytic subunit of the enzyme. The chain is Acetoin:2,6-dichlorophenolindophenol oxidoreductase subunit alpha (acoA) from Bacillus subtilis (strain 168).